The following is a 101-amino-acid chain: AFA-III adhesin operon regulatory protein (101 aa).

Its function is as follows. Regulates the transcription of genes involved in the biosynthesis of afimbrial adhesin-III. In Escherichia coli, this protein is AFA-III adhesin operon regulatory protein (afaA).